The sequence spans 97 residues: YcgL domain-containing protein Psyr_1564 (97 aa).

The YcgL domain occupies 3 to 87 (RICSIYRSPK…AEDDYIEHLP (85 aa)).

In Pseudomonas syringae pv. syringae (strain B728a), this protein is YcgL domain-containing protein Psyr_1564.